Here is a 199-residue protein sequence, read N- to C-terminus: NAD(P)H dehydrogenase (quinone) (199 aa).

The region spanning 4-190 (VLVLYYSTYG…EGARHQGELI (187 aa)) is the Flavodoxin-like domain. FMN is bound by residues 10–15 (STYGHV) and 78–80 (TRF). Position 12 (Tyr12) interacts with NAD(+). A substrate-binding site is contributed by Trp98. FMN-binding positions include 113–119 (STATQHG) and His134.

It belongs to the WrbA family. FMN serves as cofactor.

It catalyses the reaction a quinone + NADH + H(+) = a quinol + NAD(+). It carries out the reaction a quinone + NADPH + H(+) = a quinol + NADP(+). This is NAD(P)H dehydrogenase (quinone) from Cupriavidus metallidurans (strain ATCC 43123 / DSM 2839 / NBRC 102507 / CH34) (Ralstonia metallidurans).